Consider the following 246-residue polypeptide: Pyridoxine 5'-phosphate synthase (246 aa).

Position 12 (Asn-12) interacts with 3-amino-2-oxopropyl phosphate. 14-15 (DH) lines the 1-deoxy-D-xylulose 5-phosphate pocket. Arg-23 contacts 3-amino-2-oxopropyl phosphate. Residue His-48 is the Proton acceptor of the active site. Arg-50 and His-55 together coordinate 1-deoxy-D-xylulose 5-phosphate. The active-site Proton acceptor is Glu-75. 1-deoxy-D-xylulose 5-phosphate is bound at residue Thr-105. The Proton donor role is filled by His-196. 3-amino-2-oxopropyl phosphate contacts are provided by residues Gly-197 and 218-219 (GH).

Belongs to the PNP synthase family. In terms of assembly, homooctamer; tetramer of dimers.

It localises to the cytoplasm. It carries out the reaction 3-amino-2-oxopropyl phosphate + 1-deoxy-D-xylulose 5-phosphate = pyridoxine 5'-phosphate + phosphate + 2 H2O + H(+). It functions in the pathway cofactor biosynthesis; pyridoxine 5'-phosphate biosynthesis; pyridoxine 5'-phosphate from D-erythrose 4-phosphate: step 5/5. Catalyzes the complicated ring closure reaction between the two acyclic compounds 1-deoxy-D-xylulose-5-phosphate (DXP) and 3-amino-2-oxopropyl phosphate (1-amino-acetone-3-phosphate or AAP) to form pyridoxine 5'-phosphate (PNP) and inorganic phosphate. This is Pyridoxine 5'-phosphate synthase from Thioalkalivibrio sulfidiphilus (strain HL-EbGR7).